A 123-amino-acid chain; its full sequence is Small ribosomal subunit protein uS12 (123 aa).

Positions Met-1–Arg-30 are disordered. The segment covering Gly-11–Lys-20 has biased composition (basic and acidic residues). Asp-89 carries the post-translational modification 3-methylthioaspartic acid.

This sequence belongs to the universal ribosomal protein uS12 family. As to quaternary structure, part of the 30S ribosomal subunit. Contacts proteins S8 and S17. May interact with IF1 in the 30S initiation complex.

Its function is as follows. With S4 and S5 plays an important role in translational accuracy. Interacts with and stabilizes bases of the 16S rRNA that are involved in tRNA selection in the A site and with the mRNA backbone. Located at the interface of the 30S and 50S subunits, it traverses the body of the 30S subunit contacting proteins on the other side and probably holding the rRNA structure together. The combined cluster of proteins S8, S12 and S17 appears to hold together the shoulder and platform of the 30S subunit. In Streptomyces avermitilis (strain ATCC 31267 / DSM 46492 / JCM 5070 / NBRC 14893 / NCIMB 12804 / NRRL 8165 / MA-4680), this protein is Small ribosomal subunit protein uS12 (rpsL).